The primary structure comprises 290 residues: MSSLMLRLLPLLYIISAHFVLHPETSPSLIYEIGSIVTFHCRLETTTNIRSVSWYNKNRLISNHEVQNMDNLSFTDDGYVLIHELNKINNLAVDSKLYFHIKHNRTTSLLKIKAKSAYDATCLTCTFTVDNEKTSATSCLKLFMKPIVVLYFRYLDNFLDVTCTVTSYPKPNVVIKFLGEVYKRDIPIVRQNENGSSTVSVNFTFKRRTKLEFVGKTVSCLASSWFTNQKASALVTSGEHTVQNHDEYSKEGVKSSNSDETVFTWTVPLILILISVIVLLISVCIVAFKS.

Residues 1 to 17 (MSSLMLRLLPLLYIISA) form the signal peptide. The Extracellular portion of the chain corresponds to 18-267 (HFVLHPETSP…SDETVFTWTV (250 aa)). One can recognise an Ig-like V-type domain in the interval 23–135 (PETSPSLIYE…TFTVDNEKTS (113 aa)). Cysteines 41 and 125 form a disulfide. N-linked (GlcNAc...) asparagine; by host glycans are attached at residues Asn71, Asn104, Asn194, and Asn202. In terms of domain architecture, Ig-like C2-type spans 146–236 (PIVVLYFRYL…TNQKASALVT (91 aa)). The chain crosses the membrane as a helical span at residues 268 to 288 (PLILILISVIVLLISVCIVAF). Topologically, residues 289–290 (KS) are cytoplasmic.

It localises to the membrane. The protein is Putative OX-2 membrane glycoprotein homolog (U85) of Homo sapiens (Human).